We begin with the raw amino-acid sequence, 222 residues long: Thiol:disulfide interchange protein DsbL (222 aa).

Positions 1 to 27 are cleaved as a signal peptide; that stretch reads MSAKWINSIFKSVVLTAALALPFTASA. The 194-residue stretch at 28–221 folds into the Thioredoxin domain; it reads FTEGTDYMVL…MAQLVRELAT (194 aa). A disulfide bridge connects residues C56 and C59.

It belongs to the thioredoxin family. DsbL subfamily. As to quaternary structure, interacts with DsbI.

The protein resides in the periplasm. In terms of biological role, involved in disulfide-bond formation. Acts by transferring its disulfide bond to other proteins. Part of a redox system composed of DsbI and DsbL that mediates formation of an essential disulfide bond in AssT. The sequence is that of Thiol:disulfide interchange protein DsbL from Lelliottia amnigena (Enterobacter amnigenus).